The chain runs to 367 residues: Heparan sulfate glucosamine 3-O-sulfotransferase 2 (367 aa).

The Cytoplasmic portion of the chain corresponds to 1–19; that stretch reads MAYRVLGRAGPPQPRRARR. A helical; Signal-anchor for type II membrane protein membrane pass occupies residues 20-39; it reads LLFAFTLSLSCTYLCYSFLC. Residues 40-367 are Lumenal-facing; the sequence is CCDDLGRSRL…ETVGQDFRWE (328 aa). The interval 61–110 is disordered; it reads AGGQKLLQKSRPCDPSGPTPSEPSAPSAPAAAVPAPRLSGSNHSGSPKLG. A compositionally biased stretch (low complexity) spans 84–96; that stretch reads SAPSAPAAAVPAP. N-linked (GlcNAc...) asparagine glycosylation occurs at asparagine 102. A 3'-phosphoadenylyl sulfate-binding site is contributed by 124–128; sequence KGGTR. Residues 146–152 and 177–180 each bind substrate; these read EPHFFDR and KTPS. Residue asparagine 193 is glycosylated (N-linked (GlcNAc...) asparagine). 3'-phosphoadenylyl sulfate is bound by residues arginine 205 and serine 213. An N-linked (GlcNAc...) asparagine glycan is attached at asparagine 235. Position 245–246 (245–246) interacts with substrate; sequence WN. Asparagine 306 carries N-linked (GlcNAc...) asparagine glycosylation. Cysteines 313 and 325 form a disulfide. 330-334 lines the 3'-phosphoadenylyl sulfate pocket; the sequence is KGRTH.

The protein belongs to the sulfotransferase 1 family. As to expression, highly expressed in the brain and weakly expressed in the heart, placenta, lung and skeletal muscle.

The protein resides in the golgi apparatus membrane. It catalyses the reaction alpha-D-glucosaminyl-[heparan sulfate](n) + 3'-phosphoadenylyl sulfate = 3-sulfo-alpha-D-glucosaminyl-[heparan sulfate](n) + adenosine 3',5'-bisphosphate + H(+). Functionally, sulfotransferase that utilizes 3'-phospho-5'-adenylyl sulfate (PAPS) to catalyze the transfer of a sulfo group to an N-unsubstituted glucosamine linked to a 2-O-sulfo iduronic acid unit on heparan sulfate. Catalyzes the O-sulfation of glucosamine in GlcA2S-GlcNS. Unlike HS3ST1/3-OST-1, does not convert non-anticoagulant heparan sulfate to anticoagulant heparan sulfate. In Homo sapiens (Human), this protein is Heparan sulfate glucosamine 3-O-sulfotransferase 2 (HS3ST2).